The primary structure comprises 325 residues: NADH-quinone oxidoreductase subunit H (325 aa).

A run of 8 helical transmembrane segments spans residues isoleucine 11–phenylalanine 31, valine 81–valine 101, isoleucine 114–glycine 134, leucine 154–phenylalanine 174, valine 186–valine 206, phenylalanine 237–phenylalanine 257, leucine 265–isoleucine 285, and isoleucine 304–alanine 324.

Belongs to the complex I subunit 1 family. In terms of assembly, NDH-1 is composed of 13 different subunits. Subunits NuoA, H, J, K, L, M, N constitute the membrane sector of the complex.

It is found in the cell inner membrane. It carries out the reaction a quinone + NADH + 5 H(+)(in) = a quinol + NAD(+) + 4 H(+)(out). Functionally, NDH-1 shuttles electrons from NADH, via FMN and iron-sulfur (Fe-S) centers, to quinones in the respiratory chain. The immediate electron acceptor for the enzyme in this species is believed to be ubiquinone. Couples the redox reaction to proton translocation (for every two electrons transferred, four hydrogen ions are translocated across the cytoplasmic membrane), and thus conserves the redox energy in a proton gradient. This subunit may bind ubiquinone. The sequence is that of NADH-quinone oxidoreductase subunit H from Escherichia coli O45:K1 (strain S88 / ExPEC).